Reading from the N-terminus, the 218-residue chain is 1-Cys peroxiredoxin PER1 (218 aa).

The Thioredoxin domain maps to 4 to 164 (LTIGDTVPNL…VVRAVDSLLT (161 aa)). The active-site Cysteine sulfenic acid (-SOH) intermediate is cysteine 46. A Bipartite nuclear localization signal motif is present at residues 194–217 (KKMFPQGFETADLPSKKGYLRFTK).

It belongs to the peroxiredoxin family. Prx6 subfamily.

Its subcellular location is the nucleus. The protein localises to the cytoplasm. It carries out the reaction a hydroperoxide + [thioredoxin]-dithiol = an alcohol + [thioredoxin]-disulfide + H2O. Functionally, thiol-specific peroxidase that catalyzes the reduction of hydrogen peroxide and organic hydroperoxides to water and alcohols, respectively. Seems to contribute to the inhibition of germination during stress. This chain is 1-Cys peroxiredoxin PER1 (PER1), found in Triticum aestivum (Wheat).